The sequence spans 651 residues: Probable potassium transport system protein Kup (651 aa).

Transmembrane regions (helical) follow at residues 41-61 (LVLGALGVVYGDIGTSPIYAF), 82-102 (VVSLIFWALTLVVTVKYVLFV), 130-150 (LILGVGICGAALFFGDAVITP), 163-183 (IVAPNLTPFVVPATVVILVTL), 194-214 (VAIVFGPIMALWFVALGASGL), 235-255 (FLTVSPAVAFVTVGAVFLAMT), 276-296 (WLWIVFPCLLLNYFGQAAFIL), 309-329 (MIPSFALWPMVLLATAATVIA), 366-386 (IYIPRVNLLLGLAVVILVLGF), 395-415 (AYGIAVTGNMLVTTVLLYIVM), 426-446 (ALPIILGFLVIDMLFFSANII), and 450-470 (EGGWASIGIATVLVLIMWTWV).

Belongs to the HAK/KUP transporter (TC 2.A.72) family.

It localises to the cell inner membrane. It catalyses the reaction K(+)(in) + H(+)(in) = K(+)(out) + H(+)(out). Transport of potassium into the cell. Likely operates as a K(+):H(+) symporter. The chain is Probable potassium transport system protein Kup from Brucella melitensis biotype 2 (strain ATCC 23457).